A 340-amino-acid polypeptide reads, in one-letter code: MKHSLHKIIERQDLSTEEIKEVFKHCFSQEVSDSELAAILISLKMKGETAEEVAGLSQVIQEHSPFLLNFHQPVMDNCGTGGDRSNSFNISTCSAFVLAGAGVTVAKHGNRSVSSQTGSADVLEKLGVSLAFTKEQVNEMLDKNQIAFLFAQHVHPTLKQVGKVRKDLRIPTIFNFIGPLTNPVHLDSQYIGVYDPEALQMVAKAAQLLGRERAIVIHGAGGLDEASLQGENKYILVENDRLEEKTIHPEEVGLSVYPNDEIQGGNATENANILLSVLKGEDSAYLDTVLFNAGIALFASKKADSIYDGVELARESITSGSALSKLNNLITFSKKVSEVV.

5-phospho-alpha-D-ribose 1-diphosphate contacts are provided by residues Gly79, 82-83, Ser87, 89-92, 107-115, and Ser119; these read GD, NIST, and KHGNRSVSS. Gly79 lines the anthranilate pocket. Ser91 serves as a coordination point for Mg(2+). An anthranilate-binding site is contributed by Asn110. Arg165 contributes to the anthranilate binding site. Mg(2+) contacts are provided by Asp224 and Glu225.

This sequence belongs to the anthranilate phosphoribosyltransferase family. As to quaternary structure, homodimer. It depends on Mg(2+) as a cofactor.

It catalyses the reaction N-(5-phospho-beta-D-ribosyl)anthranilate + diphosphate = 5-phospho-alpha-D-ribose 1-diphosphate + anthranilate. The protein operates within amino-acid biosynthesis; L-tryptophan biosynthesis; L-tryptophan from chorismate: step 2/5. In terms of biological role, catalyzes the transfer of the phosphoribosyl group of 5-phosphorylribose-1-pyrophosphate (PRPP) to anthranilate to yield N-(5'-phosphoribosyl)-anthranilate (PRA). This is Anthranilate phosphoribosyltransferase from Oceanobacillus iheyensis (strain DSM 14371 / CIP 107618 / JCM 11309 / KCTC 3954 / HTE831).